Reading from the N-terminus, the 190-residue chain is ADP-ribosylation factor F (190 aa).

GTP is bound by residues 34 to 40, 75 to 79, and 136 to 139; these read DGAGKST, DIGGQ, and NKQD.

Belongs to the small GTPase superfamily. Arf family.

Its subcellular location is the golgi apparatus. Functionally, GTP-binding protein that may be involved in protein trafficking. May modulate vesicle budding and uncoating within the Golgi apparatus. This chain is ADP-ribosylation factor F (arrF), found in Dictyostelium discoideum (Social amoeba).